The sequence spans 375 residues: MVSLYLENGLFLQAQSFGASGTQAGELVFNTSMSGYQEVISDPSYKGQFVVFSMPEIGVVGANSKDDESFFSCAGVLARHYNEFFSNSRADFSLSAYLKERGVLGVCGVDTRSLIKTLRHHGCLMMVASTIEHDKNKLEEILKNAPKISHSPLVSSVSTPKITTHQRATFDFKTLDYKPFDEKTSHKIIAVLDFGAKGNILNELQNVGLKALIYPHHTKASELIKAYEKKEISGIFLSNGPGDPLSLQQEIGEIKQLINAKIPMLGICLGHQLLSIAQGYPTYKLKFGHHGSNHPVKNLKTNAVEITAQNHNYCVPEDIEEIAIITHRNLFDNTIEGVRYKNAPIISVQHHPESSPGPKESHYIFKEFVELLKDF.

A CPSase region spans residues 1–184; sequence MVSLYLENGL…LDYKPFDEKT (184 aa). 3 residues coordinate L-glutamine: Ser44, Gly240, and Gly242. The Glutamine amidotransferase type-1 domain occupies 188–375; it reads IIAVLDFGAK…KEFVELLKDF (188 aa). Cys268 acts as the Nucleophile in catalysis. L-glutamine is bound by residues Leu269, Gln272, Asn310, and Tyr313. Catalysis depends on residues His351 and Glu353.

It belongs to the CarA family. Composed of two chains; the small (or glutamine) chain promotes the hydrolysis of glutamine to ammonia, which is used by the large (or ammonia) chain to synthesize carbamoyl phosphate. Tetramer of heterodimers (alpha,beta)4.

It catalyses the reaction hydrogencarbonate + L-glutamine + 2 ATP + H2O = carbamoyl phosphate + L-glutamate + 2 ADP + phosphate + 2 H(+). It carries out the reaction L-glutamine + H2O = L-glutamate + NH4(+). It participates in amino-acid biosynthesis; L-arginine biosynthesis; carbamoyl phosphate from bicarbonate: step 1/1. The protein operates within pyrimidine metabolism; UMP biosynthesis via de novo pathway; (S)-dihydroorotate from bicarbonate: step 1/3. Functionally, small subunit of the glutamine-dependent carbamoyl phosphate synthetase (CPSase). CPSase catalyzes the formation of carbamoyl phosphate from the ammonia moiety of glutamine, carbonate, and phosphate donated by ATP, constituting the first step of 2 biosynthetic pathways, one leading to arginine and/or urea and the other to pyrimidine nucleotides. The small subunit (glutamine amidotransferase) binds and cleaves glutamine to supply the large subunit with the substrate ammonia. This is Carbamoyl phosphate synthase small chain from Helicobacter pylori (strain ATCC 700392 / 26695) (Campylobacter pylori).